The primary structure comprises 986 residues: Anoctamin-1 (986 aa).

Over 1–333 (MRVNEKYSTL…FGEKIGLYFA (333 aa)) the chain is Cytoplasmic. Residues 79–121 (LVRRVQHSDTPSGARSVKQDHPLPGKGASLDAGSGEPPMDYHE) form a disordered region. 2 positions are modified to phosphoserine: serine 107 and serine 196. The chain crosses the membrane as a helical span at residues 334 to 354 (WLGVYTQMLIPASIVGIIVFL). Residues 355–406 (YGCATMDENIPSMEMCDQRHNITMCPLCDKTCSYWKMSSACATARASHLFDN) lie on the Extracellular side of the membrane. 4 disulfides stabilise this stretch: cysteine 370/cysteine 395, cysteine 379/cysteine 862, cysteine 382/cysteine 386, and cysteine 651/cysteine 656. Residues 407–427 (PATVFFSVFMALWAATFMEHW) traverse the membrane as a helical segment. Glutamate 425 serves as a coordination point for Ca(2+). The Cytoplasmic segment spans residues 428-519 (KRKQMRLNYR…RDRFPAYLTN (92 aa)). The helical transmembrane segment at 520–540 (LVSIIFMIAVTFAIVLGVIIY) threads the bilayer. The Extracellular portion of the chain corresponds to 541-568 (RISMAAALAMNSSPSVRSNIRVTVTATA). Residues 569–589 (VIINLVVIILLDEVYGCIARW) traverse the membrane as a helical segment. Topologically, residues 590–607 (LTKIEVPKTEKSFEERLI) are cytoplasmic. A helical membrane pass occupies residues 608 to 628 (FKAFLLKFVNSYTPIFYVAFF). The Extracellular segment spans residues 629–657 (KGRFVGRPGDYVYIFRSFRMEECAPGGCL). Residues 658–678 (MELCIQLSIIMLGKQLIQNNL) traverse the membrane as a helical segment. Asparagine 677, glutamate 680, glutamate 728, glutamate 731, glutamate 760, and aspartate 764 together coordinate Ca(2+). Topologically, residues 679–725 (FEIGIPKMKKLIRYLKLKQQSPPDHEECVKRKQRYEVDYNLEPFAGL) are cytoplasmic. 2 consecutive transmembrane segments (helical) span residues 726–746 (TPEY…VASF) and 747–767 (PLAP…DAKK). The Cytoplasmic portion of the chain corresponds to 768–784 (FVTELRRPVAVRAKDIG). Residues 785-805 (IWYNILRGIGKLAVIINAFVI) form a helical membrane-spanning segment. Residues 806–892 (SFTSDFIPRL…FWAVLAARLA (87 aa)) are Extracellular-facing. A glycan (N-linked (GlcNAc...) asparagine) is linked at asparagine 832. The helical transmembrane segment at 893-913 (FVIVFQNLVMFMSDFVDWVIP) threads the bilayer. Residues aspartate 909 and aspartate 914 each coordinate Ca(2+). The Cytoplasmic portion of the chain corresponds to 914–986 (DIPKDISQQI…PSHAYHGGVL (73 aa)). Basic and acidic residues predominate over residues 951-960 (KERQKDEPPC). The segment at 951–986 (KERQKDEPPCNHHNTKACPDSLGSPAPSHAYHGGVL) is disordered.

This sequence belongs to the anoctamin family. In terms of assembly, homodimer. Interacts with CFTR. Interacts with TRPV4. In terms of tissue distribution, expressed in nasal epithelial cells (at protein level). In the kidney, expressed in the collecting duct (at protein level). Broadly expressed with higher levels in liver, skeletal muscle and gastrointestinal muscles. Expressed in eccrine sweat glands.

The protein resides in the apical cell membrane. Its subcellular location is the presynapse. It carries out the reaction chloride(in) = chloride(out). ATP and calmodulin are essential for its activation. Channel activity is inhibited by CFTR protein and by chloride inhibitors such as niflumic acid (NFA) and 4,4'-diisothiocyanatostilbene-2,2'-disulfonic acid (DIDS). Activated by heat with activation seen at temperatures above 44 degrees Celsius. Activated by BDNF in radial glial cells. In terms of biological role, calcium-activated chloride channel (CaCC). Plays a role in transepithelial anion transport and smooth muscle contraction. Required for the normal functioning of the interstitial cells of Cajal (ICCs) which generate electrical pacemaker activity in gastrointestinal smooth muscles. Acts as a major contributor to basal and stimulated chloride conductance in airway epithelial cells and plays an important role in tracheal cartilage development. Required for CFTR activation by enhancing endoplasmic reticulum Ca(2+) store release and is also required for CFTR membrane expression. Required for basal and ATP-dependent mucus secretion in airways and intestine, probably by controlling exocytosis of mucus-filled granules by providing Ca(2+) to an apical signaling compartment. Contributes to airway mucus expression induced by interleukins IL3 and IL8 and by the asthma-associated protein CLCA1 and is required for expression of mucin MUC5AC. However, was shown in another study not to be required for MUC5AC expression. Plays a role in the propagation of Ca(2+) waves in Kolliker's organ in the cochlea and contributes to the refinement of auditory brainstem circuitries prior to hearing onset. In vomeronasal sensory neurons, modulates spontaneous firing patterns in the absence of stimuli as well as the firing pattern of pheromone-evoked activity. Responsible for calcium-activated chloride channel activity in type I taste cells of the vallate papillae. Acts as a heat sensor in nociceptive neurons. In dorsal root ganglion neurons, plays a role in mediating non-histaminergic Mas-related G-protein coupled receptor (MRGPR)-dependent itching, acting as a downstream effector of MRGPRs. In the developing brain, required for the Ca(2+)-dependent process extension of radial glial cells. Its function is as follows. Calcium-activated chloride channel (CaCC). Contributes to calcium-activated chloride secretion in human sweat gland epithelial cells. Shows increased basal chloride permeability and decreased Ca(2+)-induced chloride permeability. Calcium-activated chloride channel (CaCC). Shows increased sensitivity to intracellular Ca(2+). This is Anoctamin-1 (ANO1) from Homo sapiens (Human).